Here is a 2327-residue protein sequence, read N- to C-terminus: Genome polyprotein (2327 aa).

The Peptidase C28 domain occupies 1 to 201 (MNTTDCFIAV…WKASVQRKLK (201 aa)). Residues 1–1475 (MNTTDCFIAV…SFVKRAFKRL (1475 aa)) are Cytoplasmic-facing. Active-site for leader protease activity residues include Cys51, His148, and Asp163. Disordered stretches follow at residues 196–218 (VQRK…QSGN) and 238–265 (QLGD…NTQN). Gly202 carries N-myristoyl glycine; by host lipidation. Composition is skewed to polar residues over residues 204-218 (GQSS…QSGN) and 238-251 (QLGD…SNEG). Residues 252–265 (STDTTSTHTTNTQN) are compositionally biased toward low complexity. Residues 787–795 (ALLRAATYY) are antigenic epitope. The Cell attachment site motif lies at 864–866 (RGD). One can recognise an SF3 helicase domain in the interval 1184 to 1348 (NVHIANLCKV…DGYKINNKLD (165 aa)). 1212–1219 (GKSGQGKS) provides a ligand contact to ATP. The stretch at 1476–1496 (KENFEIVALCLTLLANIVIMI) is an intramembrane region. The Cytoplasmic segment spans residues 1497–2327 (RETHKRQKMV…RWVNAVCGDA (831 aa)). The segment at 1524–1584 (QTLDEAEKNP…PYAGPLERQR (61 aa)) is disordered. Over residues 1544–1558 (FRERTLPGQKARDDV) the composition is skewed to basic and acidic residues. O-(5'-phospho-RNA)-tyrosine is present on residues Tyr1576, Tyr1599, and Tyr1623. Positions 1647-1843 (APPTDLQKMV…YCSCVSRSML (197 aa)) constitute a Peptidase C3 domain. The active-site For protease 3C activity; Proton donor/acceptor is the His1690. Catalysis depends on for protease 3C activity residues Asp1728 and Cys1807. Residues 1873–1881 (MRKTKLAPT) carry the Nuclear localization signal motif. Positions 2091 to 2209 (RNVWDVDYSA…ASDYDLDFEA (119 aa)) constitute a RdRp catalytic domain. Asp2195 acts as the For RdRp activity in catalysis.

This sequence belongs to the picornaviruses polyprotein family. Interacts with host ISG15. In terms of assembly, interacts (via R-G-D motif) with host ITGAV/ITGB6. Interacts with host MAVS; this interaction inhibits binding of host TRAF3 to MAVS, thereby suppressing interferon-mediated responses. As to quaternary structure, forms homooligomers. Homohexamer. Interacts with host VIM. Interacts with host BECN1. In terms of assembly, interacts with host DCTN3. As to quaternary structure, interacts with RNA-dependent RNA polymerase; this interaction allows 3B-1 to binds 2 polymerases and act as a primer. It also allows the recruitment of the RNA-dependent RNA polymerase to host membranes. Interacts with RNA-dependent RNA polymerase; this interaction allows 3B-2 to act as a primer. In terms of assembly, interacts with RNA-dependent RNA polymerase; this interaction allows 3B-3 to act as a primer. As to quaternary structure, interacts with 3B-1; this interaction allows 3B-1 to binds 2 polymerases and act as a primer. It also allows the recruitment of the RNA-dependent RNA polymerase to host membranes. Interacts with 3B-2; this interaction allows 3B-2 to act as a primer. Interacts with 3B-3; this interaction allows 3B-3 to act as a primer. Removes six residues from its own C-terminus, generating sLb(pro). Post-translationally, specific enzymatic cleavages in vivo by the viral proteases yield a variety of precursors and mature proteins. The polyprotein seems to be cotranslationally cleaved at the 2A/2B junction by a ribosomal skip from one codon to the next without formation of a peptide bond. This process would release the L-P1-2A peptide from the translational complex. In terms of processing, during virion maturation, immature virions are rendered infectious following cleavage of VP0 into VP4 and VP2. This maturation seems to be an autocatalytic event triggered by the presence of RNA in the capsid and is followed by a conformational change of the particle. Myristoylation is required during RNA encapsidation and formation of the mature virus particle. Post-translationally, uridylylated by the polymerase and covalently linked to the 5'-end of genomic RNA. These uridylylated forms act as a nucleotide-peptide primer for the polymerase.

Its subcellular location is the host nucleus. The protein localises to the host cytoplasm. It is found in the virion. The protein resides in the host endoplasmic reticulum membrane. It localises to the host cytoplasmic vesicle membrane. The catalysed reaction is Autocatalytically cleaves itself from the polyprotein of the foot-and-mouth disease virus by hydrolysis of a Lys-|-Gly bond, but then cleaves host cell initiation factor eIF-4G at bonds -Gly-|-Arg- and -Lys-|-Arg-.. The enzyme catalyses a ribonucleoside 5'-triphosphate + H2O = a ribonucleoside 5'-diphosphate + phosphate + H(+). It catalyses the reaction RNA(n) + a ribonucleoside 5'-triphosphate = RNA(n+1) + diphosphate. It carries out the reaction Selective cleavage of Gln-|-Gly bond in the poliovirus polyprotein. In other picornavirus reactions Glu may be substituted for Gln, and Ser or Thr for Gly.. Its function is as follows. Autocatalytically cleaves itself from the polyprotein at the L/VP0 junction. Also cleaves the host translation initiation factors EIF4G1 and EIF4G3, in order to shut off the capped cellular mRNA transcription. Plays a role in counteracting host innate antiviral response using diverse mechanisms. Possesses a deubiquitinase activity acting on both 'Lys-48' and 'Lys-63'-linked polyubiquitin chains. In turn, inhibits the ubiquitination and subsequent activation of key signaling molecules of type I IFN response such as host RIGI, TBK1, TRAF3 and TRAF6. Inhibits host NF-kappa-B activity by inducing a decrease in RELA mRNA levels. Cleaves a peptide bond in the C-terminus of host ISG15, resulting in the damaging of this modifier that can no longer be attached to target proteins. Also cleaves host G3BP1 and G3BP2 in order to inhibit cytoplasmic stress granules assembly. Functionally, lies on the inner surface of the capsid shell. After binding to the host receptor, the capsid undergoes conformational changes. Capsid protein VP4 is released, capsid protein VP1 N-terminus is externalized, and together, they shape a pore in the host membrane through which the viral genome is translocated into the host cell cytoplasm. After genome has been released, the channel shrinks. In terms of biological role, forms an icosahedral capsid of pseudo T=3 symmetry with capsid proteins VP1 and VP3. The capsid is composed of 60 copies of each capsid protein organized in the form of twelve pentamers and encloses the viral positive strand RNA genome. Upon acidifcation in the endosome, dissociates into pentamers. Forms an icosahedral capsid of pseudo T=3 symmetry with capsid proteins VP0 and VP3. The capsid is composed of 60 copies of each capsid protein organized in the form of twelve pentamers and encloses the viral positive strand RNA genome. Upon acidifcation in the endosome, dissociates into pentamers. Its function is as follows. Forms an icosahedral capsid of pseudo T=3 symmetry with capsid proteins VP2 and VP3. The capsid is composed of 60 copies of each capsid protein organized in the form of twelve pentamers and encloses the viral positive strand RNA genome. Mediates cell entry by attachment to an integrin receptor, usually host ITGAV/ITGB6. In addition, targets host MAVS to suppress type I IFN pathway. Upon acidifcation in the endosome, dissociates into pentamers. Functionally, mediates self-processing of the polyprotein by a translational effect termed 'ribosome skipping'. Mechanistically, 2A-mediated cleavage occurs between the C-terminal glycine and the proline of the downstream protein 2B. In the case of foot-and-mouth disease virus, the 2A oligopeptide is post-translationally 'trimmed' from the C-terminus of the upstream protein 1D by 3C proteinase. In terms of biological role, plays an essential role in the virus replication cycle by acting as a viroporin. Creates a pore in the host endoplasmic reticulum and as a consequence releases Ca2+ in the cytoplasm of infected cell. In turn, high levels of cytoplasmic calcium may trigger membrane trafficking and transport of viral ER-associated proteins to viroplasms, sites of viral genome replication. Associates with and induces structural rearrangements of intracellular membranes. Triggers host autophagy by interacting with host BECN1 and thereby promotes viral replication. Participates in viral replication and interacts with host DHX9. Displays RNA-binding, nucleotide binding and NTPase activities. May play a role in virion morphogenesis and viral RNA encapsidation by interacting with the capsid protein VP3. Its function is as follows. Plays important roles in virus replication, virulence and host range. Cooperates with host DDX56 to inhibit IRF3 nuclear translocation and subsequent type I interferon production. Functionally, covalently linked to the 5'-end of both the positive-strand and negative-strand genomic RNAs. Acts as a genome-linked replication primer. In terms of biological role, cysteine protease that generates mature viral proteins from the precursor polyprotein. In addition to its proteolytic activity, binds to viral RNA and thus influences viral genome replication. RNA and substrate bind cooperatively to the protease. RNA-directed RNA polymerase 3D-POL replicates genomic and antigenomic RNA by recognizing replications specific signals. Covalently attaches UMP to a tyrosine of VPg, which is used to prime RNA synthesis. The positive stranded RNA genome is first replicated at virus induced membranous vesicles, creating a dsRNA genomic replication form. This dsRNA is then used as template to synthesize positive stranded RNA genomes. ss(+)RNA genomes are either translated, replicated or encapsidated. The polypeptide is Genome polyprotein (Bos taurus (Bovine)).